A 316-amino-acid chain; its full sequence is RNA interference defective protein 11 (316 aa).

The RING-type; degenerate zinc finger occupies 183 to 218; it reads CYINFNCQTSKVMFGCGHVYCEQCLNSWNDKPCSVC.

In terms of assembly, interacts (via RING-type zinc finger domain) with rde-10.

In complex with rde-10, required in the endogenous and exogenous siRNA pathway for biogenesis and accumulation of secondary small interfering RNA (siRNA) intermediates, such as 22G-siRNAs derived from ergo-1 targets. The protein is RNA interference defective protein 11 of Caenorhabditis elegans.